A 151-amino-acid chain; its full sequence is Ribosome maturation factor RimP (151 aa).

It belongs to the RimP family.

Its subcellular location is the cytoplasm. Its function is as follows. Required for maturation of 30S ribosomal subunits. This is Ribosome maturation factor RimP from Shewanella sp. (strain ANA-3).